The primary structure comprises 158 residues: MNKKRNAPVRKIIADNRKARFNFEILDNLEVGLVLQGAEVKSLRSNHANIAESYASFENGELWLVNSYIPEYTQANRFNHEPRRLRKLLISKREMARFFNATSREGMTLVPLKLYFNERGRAKLEIALARGKKLHDKRETEKKRDWRCEKARLLKRYG.

The protein belongs to the SmpB family.

The protein localises to the cytoplasm. In terms of biological role, required for rescue of stalled ribosomes mediated by trans-translation. Binds to transfer-messenger RNA (tmRNA), required for stable association of tmRNA with ribosomes. tmRNA and SmpB together mimic tRNA shape, replacing the anticodon stem-loop with SmpB. tmRNA is encoded by the ssrA gene; the 2 termini fold to resemble tRNA(Ala) and it encodes a 'tag peptide', a short internal open reading frame. During trans-translation Ala-aminoacylated tmRNA acts like a tRNA, entering the A-site of stalled ribosomes, displacing the stalled mRNA. The ribosome then switches to translate the ORF on the tmRNA; the nascent peptide is terminated with the 'tag peptide' encoded by the tmRNA and targeted for degradation. The ribosome is freed to recommence translation, which seems to be the essential function of trans-translation. The sequence is that of SsrA-binding protein from Bartonella quintana (strain Toulouse) (Rochalimaea quintana).